Consider the following 108-residue polypeptide: TYRO protein tyrosine kinase-binding protein (108 aa).

An N-terminal signal peptide occupies residues 1–25; it reads MGRLGPSNGLLPLLLAVGGFSLVQA. Residues 26-36 are Extracellular-facing; that stretch reads QRECSCSAVSP. The helical transmembrane segment at 37-57 threads the bilayer; it reads GILAGIVLGDLVLTLLIALAV. Aspartate 46 provides a ligand contact to Ca(2+). Over 58–108 the chain is Cytoplasmic; sequence YSLGRLVPRTRGAVDVTRKQHIAETESAYQELQGQRSDVYSDLNTQRQYYK. The region spanning 75-103 is the ITAM domain; it reads RKQHIAETESAYQELQGQRSDVYSDLNTQ. Residues tyrosine 86 and tyrosine 97 each carry the phosphotyrosine modification.

It belongs to the TYROBP family. Homodimer; disulfide-linked. Homotrimer; disulfide-linked. Homotetramer; disulfide-linked. Homotrimers and homotetramers form when low levels of partner receptors are available and is competitive with assembly with interacting receptors. They may represent alternative oligomerization states or may be intermediates in the receptor assembly process. Binding of a metal cation aids in homooligomerization through coordination of the metal ion by the subunits of the oligomer. Interacts with TREM1. Interacts with TREM2. Interacts with CLECSF5. Interacts with CD300LB and CD300C2. Interacts with CD300E. Interacts (via ITAM domain) with SYK (via SH2 domains); activates SYK mediating neutrophils and macrophages integrin-mediated activation. Interacts with KLRC2. Interacts with CD300H. Interacts with KLRD1. Interacts with SIGLEC1. Following ligand binding by associated receptors, tyrosine phosphorylated in the ITAM domain which leads to activation of additional tyrosine kinases and subsequent cell activation. In terms of tissue distribution, highly expressed in spleen, liver and thymus. Weakly expressed in lymph nodes. Expressed in peripheral blood leukocytes, granulocytes, macrophages, and monocytes. LPS does not increase expression in granulocytes.

Its subcellular location is the cell membrane. Functionally, adapter protein which non-covalently associates with activating receptors found on the surface of a variety of immune cells to mediate signaling and cell activation following ligand binding by the receptors. TYROBP is tyrosine-phosphorylated in the ITAM domain following ligand binding by the associated receptors which leads to activation of additional tyrosine kinases and subsequent cell activation. Also has an inhibitory role in some cells. Non-covalently associates with activating receptors of the CD300 family to mediate cell activation. Also mediates cell activation through association with activating receptors of the CD200R family. Required for neutrophil activation mediated by integrin. Required for the activation of myeloid cells mediated by the CLEC5A/MDL1 receptor. Associates with natural killer (NK) cell receptors such as the KLRD1/KLRC2 heterodimer to mediate NK cell activation. Associates with TREM1 to mediate activation of neutrophils and monocytes. Associates with TREM2 on monocyte-derived dendritic cells to mediate up-regulation of chemokine receptor CCR7 and dendritic cell maturation and survival. Association with TREM2 mediates cytokine-induced formation of multinucleated giant cells which are formed by the fusion of macrophages. Stabilizes the TREM2 C-terminal fragment (TREM2-CTF) produced by TREM2 ectodomain shedding which suppresses the release of pro-inflammatory cytokines. In microglia, required with TREM2 for phagocytosis of apoptotic neurons. Required with ITGAM/CD11B in microglia to control production of microglial superoxide ions which promote the neuronal apoptosis that occurs during brain development. Promotes pro-inflammatory responses in microglia following nerve injury which accelerates degeneration of injured neurons. Positively regulates the expression of the IRAK3/IRAK-M kinase and IL10 production by liver dendritic cells and inhibits their T cell allosimulatory ability. Negatively regulates B cell proliferation. Required for CSF1-mediated osteoclast cytoskeletal organization. Positively regulates multinucleation during osteoclast development. The chain is TYRO protein tyrosine kinase-binding protein from Sus scrofa (Pig).